We begin with the raw amino-acid sequence, 388 residues long: GTPase Obg (388 aa).

In terms of domain architecture, Obg spans Met1 to Leu159. The OBG-type G domain maps to Ala160–Asp333. Residues Gly166 to Ser173, Phe191 to Val195, Asp213 to Gly216, Asn283 to Asp286, and Ser314 to Tyr316 contribute to the GTP site. Ser173 and Thr193 together coordinate Mg(2+). Residues Gln356–Asp377 are disordered. The span at Val362 to Asp377 shows a compositional bias: acidic residues.

It belongs to the TRAFAC class OBG-HflX-like GTPase superfamily. OBG GTPase family. As to quaternary structure, monomer. Mg(2+) is required as a cofactor.

The protein resides in the cytoplasm. Its function is as follows. An essential GTPase which binds GTP, GDP and possibly (p)ppGpp with moderate affinity, with high nucleotide exchange rates and a fairly low GTP hydrolysis rate. Plays a role in control of the cell cycle, stress response, ribosome biogenesis and in those bacteria that undergo differentiation, in morphogenesis control. In Shewanella piezotolerans (strain WP3 / JCM 13877), this protein is GTPase Obg.